A 132-amino-acid chain; its full sequence is Small ribosomal subunit protein uS8 (132 aa).

Belongs to the universal ribosomal protein uS8 family. Part of the 30S ribosomal subunit. Contacts proteins S5 and S12.

Functionally, one of the primary rRNA binding proteins, it binds directly to 16S rRNA central domain where it helps coordinate assembly of the platform of the 30S subunit. The chain is Small ribosomal subunit protein uS8 from Borrelia turicatae (strain 91E135).